The primary structure comprises 155 residues: Cardio acceleratory peptide 2b (155 aa).

Residues methionine 1–alanine 26 form the signal peptide. The propeptide occupies glutamate 27–asparagine 33. Valine 47 carries the post-translational modification Valine amide. Positions serine 50–glutamine 85 are excised as a propeptide. The residue at position 96 (valine 96) is a Valine amide. The propeptide occupies serine 99–aspartate 117. Residue leucine 134 is modified to Leucine amide. Residues serine 138–asparagine 155 constitute a propeptide that is removed on maturation.

It belongs to the pyrokinin family.

It is found in the secreted. CAP-1 and CAP-2, but not CAP-3 are ligands for the Capa receptor. CAP-1 and CAP-2 are probably components of the signal transduction pathway that leads to Malpighian tubule fluid secretion via the second messenger nitric oxide. This is Cardio acceleratory peptide 2b from Drosophila pseudoobscura pseudoobscura (Fruit fly).